The sequence spans 88 residues: UPF0367 protein syc2447_c (88 aa).

Belongs to the UPF0367 family.

The protein is UPF0367 protein syc2447_c of Synechococcus sp. (strain ATCC 27144 / PCC 6301 / SAUG 1402/1) (Anacystis nidulans).